Here is a 513-residue protein sequence, read N- to C-terminus: ATP synthase subunit alpha (513 aa).

169 to 176 (GDRQTGKT) lines the ATP pocket.

It belongs to the ATPase alpha/beta chains family. In terms of assembly, F-type ATPases have 2 components, CF(1) - the catalytic core - and CF(0) - the membrane proton channel. CF(1) has five subunits: alpha(3), beta(3), gamma(1), delta(1), epsilon(1). CF(0) has three main subunits: a(1), b(2) and c(9-12). The alpha and beta chains form an alternating ring which encloses part of the gamma chain. CF(1) is attached to CF(0) by a central stalk formed by the gamma and epsilon chains, while a peripheral stalk is formed by the delta and b chains.

It is found in the cell inner membrane. The enzyme catalyses ATP + H2O + 4 H(+)(in) = ADP + phosphate + 5 H(+)(out). Produces ATP from ADP in the presence of a proton gradient across the membrane. The alpha chain is a regulatory subunit. This Idiomarina loihiensis (strain ATCC BAA-735 / DSM 15497 / L2-TR) protein is ATP synthase subunit alpha.